A 397-amino-acid polypeptide reads, in one-letter code: Elongation factor Tu (397 aa).

The 198-residue stretch at 10-207 folds into the tr-type G domain; it reads KPHVNIGTIG…AVDESIPDPV (198 aa). The G1 stretch occupies residues 19–26; that stretch reads GHVDHGKT. 19–26 is a GTP binding site; the sequence is GHVDHGKT. T26 lines the Mg(2+) pocket. The G2 stretch occupies residues 63 to 67; sequence GITIN. The interval 84 to 87 is G3; that stretch reads DAPG. Residues 84 to 88 and 139 to 142 contribute to the GTP site; these read DAPGH and NKAD. Residues 139–142 form a G4 region; that stretch reads NKAD. Positions 177-179 are G5; it reads SGL.

The protein belongs to the TRAFAC class translation factor GTPase superfamily. Classic translation factor GTPase family. EF-Tu/EF-1A subfamily. Monomer.

Its subcellular location is the cytoplasm. It catalyses the reaction GTP + H2O = GDP + phosphate + H(+). Its function is as follows. GTP hydrolase that promotes the GTP-dependent binding of aminoacyl-tRNA to the A-site of ribosomes during protein biosynthesis. This chain is Elongation factor Tu, found in Tropheryma whipplei (strain Twist) (Whipple's bacillus).